A 234-amino-acid polypeptide reads, in one-letter code: MQQSKEQRVHGVFEKIYKNYDQMNSVISFKQHKKWRDKTMKLMNVQKGAKALDVCCGTADWTIALADAVGDKGEVKGLDFSKNMLSVGETKVKSGGYNQIELLHGNAMELPFEDNTFDYVTIGFGLRNVPDYLTVLKEMTRVVKPGGMVVCLETSQPEMIGFKQGYYVYFKYIMPLFGKLFAKSYQEYSWLQESAKAFPGMKELAALFEEAGLSDVSYHPFTGGVAATHIGKKL.

Residues Thr58, Asp79, and 106–107 (NA) contribute to the S-adenosyl-L-methionine site.

The protein belongs to the class I-like SAM-binding methyltransferase superfamily. MenG/UbiE family.

It carries out the reaction a 2-demethylmenaquinol + S-adenosyl-L-methionine = a menaquinol + S-adenosyl-L-homocysteine + H(+). It participates in quinol/quinone metabolism; menaquinone biosynthesis; menaquinol from 1,4-dihydroxy-2-naphthoate: step 2/2. Methyltransferase required for the conversion of demethylmenaquinol (DMKH2) to menaquinol (MKH2). The chain is Demethylmenaquinone methyltransferase from Bacillus pumilus (strain SAFR-032).